The sequence spans 53 residues: uncharacterized protein (53 aa).

The helical transmembrane segment at 24-44 threads the bilayer; it reads LMTFIAVNAVLSLILIRAVIL.

The protein resides in the membrane. This is an uncharacterized protein from Methanocaldococcus jannaschii (strain ATCC 43067 / DSM 2661 / JAL-1 / JCM 10045 / NBRC 100440) (Methanococcus jannaschii).